A 375-amino-acid chain; its full sequence is Aminomethyltransferase (375 aa).

The protein belongs to the GcvT family. In terms of assembly, the glycine cleavage system is composed of four proteins: P, T, L and H.

The catalysed reaction is N(6)-[(R)-S(8)-aminomethyldihydrolipoyl]-L-lysyl-[protein] + (6S)-5,6,7,8-tetrahydrofolate = N(6)-[(R)-dihydrolipoyl]-L-lysyl-[protein] + (6R)-5,10-methylene-5,6,7,8-tetrahydrofolate + NH4(+). Its function is as follows. The glycine cleavage system catalyzes the degradation of glycine. This chain is Aminomethyltransferase, found in Cupriavidus pinatubonensis (strain JMP 134 / LMG 1197) (Cupriavidus necator (strain JMP 134)).